The primary structure comprises 85 residues: YcgL domain-containing protein PC1_1941 (85 aa).

The 85-residue stretch at 1-85 (MFCVIYRSAK…PVENLLNTPV (85 aa)) folds into the YcgL domain.

This is YcgL domain-containing protein PC1_1941 from Pectobacterium carotovorum subsp. carotovorum (strain PC1).